The chain runs to 434 residues: Ribonuclease T2-like (434 aa).

Positions 1 to 18 are cleaved as a signal peptide; it reads MLLKNLHSLLQLPIFSNG. 5 cysteine pairs are disulfide-bonded: cysteine 27-cysteine 46, cysteine 35-cysteine 94, cysteine 45-cysteine 171, cysteine 102-cysteine 163, and cysteine 241-cysteine 277. N-linked (GlcNAc...) asparagine glycosylation is found at asparagine 37 and asparagine 70. Residue histidine 87 is part of the active site. 2 N-linked (GlcNAc...) asparagine glycosylation sites follow: asparagine 103 and asparagine 123. Catalysis depends on residues glutamate 156 and histidine 160.

The protein belongs to the RNase T2 family. In terms of processing, N-glycosylated.

It is found in the vacuole lumen. The protein resides in the cytoplasm. It carries out the reaction a ribonucleotidyl-ribonucleotide-RNA + H2O = a 3'-end 3'-phospho-ribonucleotide-RNA + a 5'-end dephospho-ribonucleoside-RNA + H(+). In terms of biological role, rnase which modulates cell survival under stress conditions. Released from the vacuole to the cytoplasm during stress to promote tRNA and rRNA cleavage and to activate separately a downstream pathway that promotes cell death. Involved in cell size, vacuolar morphology and growth at high temperatures and high salt concentration. The chain is Ribonuclease T2-like (RNY1) from Saccharomyces cerevisiae (strain ATCC 204508 / S288c) (Baker's yeast).